Reading from the N-terminus, the 329-residue chain is Phosphate acyltransferase (329 aa).

Belongs to the PlsX family. Homodimer. Probably interacts with PlsY.

It localises to the cytoplasm. The catalysed reaction is a fatty acyl-[ACP] + phosphate = an acyl phosphate + holo-[ACP]. Its pathway is lipid metabolism; phospholipid metabolism. Functionally, catalyzes the reversible formation of acyl-phosphate (acyl-PO(4)) from acyl-[acyl-carrier-protein] (acyl-ACP). This enzyme utilizes acyl-ACP as fatty acyl donor, but not acyl-CoA. The sequence is that of Phosphate acyltransferase from Geobacillus sp. (strain WCH70).